Here is a 694-residue protein sequence, read N- to C-terminus: N,N-dimethylglycine/sarcosine dehydrogenase (694 aa).

The protein in the N-terminal section; belongs to the NADH:flavin oxidoreductase/NADH oxidase family. In terms of assembly, monomer. The purified enzyme exists in the form of a monomer, dimer or polymer under non-denaturing conditions, but only the monomeric protein exhibits enzyme activity. FAD serves as cofactor. NAD(+) is required as a cofactor. Requires NADP(+) as cofactor.

It is found in the cytoplasm. The catalysed reaction is oxidized 2[4Fe-4S]-[ferredoxin] + N,N-dimethylglycine + H2O = reduced 2[4Fe-4S]-[ferredoxin] + sarcosine + formaldehyde + 2 H(+). It catalyses the reaction oxidized 2[4Fe-4S]-[ferredoxin] + sarcosine + H2O = reduced 2[4Fe-4S]-[ferredoxin] + formaldehyde + glycine + 2 H(+). With respect to regulation, ca(2+) increases the activity by 12%, while the other metal ions tested have no or slightly inhibitory effects. The chelating agent EDTA inhibits the activity by 33%. Involved in degradation of glycine betaine. Catalyzes the demethylation of both N,N-dimethylglycine (DMG) and sarcosine, releasing formaldehyde and forming glycine as the final product. Does not show activity toward trimethylamine (TMA), histamine, glycine betaine (GB) or choline. The C-N bond in DMG is probably oxidized by removal of a hydride equivalent to form a labile imine intermediate, which is then spontaneously hydrolyzed in the presence of water, producing sarcosine and formaldehyde. The two protons subtracted from DMG are transferred to the non-covalently bound FAD, resulting in the reduced form of FAD, which is subsequently reoxidized by coupling with reduction of the enzyme-bound NAD(P)(+). Regeneration of NAD(P)(+) is achieved by electron transfer to the [4Fe-4S] cluster in the probable membrane-anchored ferredoxin csal_0991. In Chromohalobacter salexigens (strain ATCC BAA-138 / DSM 3043 / CIP 106854 / NCIMB 13768 / 1H11), this protein is N,N-dimethylglycine/sarcosine dehydrogenase.